Here is a 369-residue protein sequence, read N- to C-terminus: Anhydro-N-acetylmuramic acid kinase (369 aa).

An ATP-binding site is contributed by 12–19; sequence GTSLDGVD.

This sequence belongs to the anhydro-N-acetylmuramic acid kinase family.

It catalyses the reaction 1,6-anhydro-N-acetyl-beta-muramate + ATP + H2O = N-acetyl-D-muramate 6-phosphate + ADP + H(+). Its pathway is amino-sugar metabolism; 1,6-anhydro-N-acetylmuramate degradation. The protein operates within cell wall biogenesis; peptidoglycan recycling. Catalyzes the specific phosphorylation of 1,6-anhydro-N-acetylmuramic acid (anhMurNAc) with the simultaneous cleavage of the 1,6-anhydro ring, generating MurNAc-6-P. Is required for the utilization of anhMurNAc either imported from the medium or derived from its own cell wall murein, and thus plays a role in cell wall recycling. This is Anhydro-N-acetylmuramic acid kinase from Escherichia coli O6:K15:H31 (strain 536 / UPEC).